A 419-amino-acid polypeptide reads, in one-letter code: Creatine kinase S-type, mitochondrial (419 aa).

A mitochondrion-targeting transit peptide spans 1-39; the sequence is MASAFSKLLTGRNASLLFTTLGTSALTTGYLLNRQKVSA. A cardiolipin-binding region spans residues 40-64; sequence DAREQHKLFPPSADYPDLRKHNNCM. Positions 46–132 constitute a Phosphagen kinase N-terminal domain; sequence KLFPPSADYP…FDPVIKLRHN (87 aa). Positions 159–401 constitute a Phosphagen kinase C-terminal domain; sequence YVLSSRVRTG…NYLVDCEKKL (243 aa). ATP is bound by residues 162 to 166 and His-225; that span reads SSRVR. Tyr-255 is subject to Phosphotyrosine. ATP contacts are provided by residues Arg-270, Arg-326, 354 to 359, and Asp-369; that span reads RGTGGV. Phosphothreonine is present on Thr-356.

This sequence belongs to the ATP:guanido phosphotransferase family. Exists as an octamer composed of four CKMT2 homodimers. As to expression, sarcomere-specific. Found only in heart and skeletal muscles.

Its subcellular location is the mitochondrion inner membrane. The enzyme catalyses creatine + ATP = N-phosphocreatine + ADP + H(+). Functionally, reversibly catalyzes the transfer of phosphate between ATP and various phosphogens (e.g. creatine phosphate). Creatine kinase isoenzymes play a central role in energy transduction in tissues with large, fluctuating energy demands, such as skeletal muscle, heart, brain and spermatozoa. This chain is Creatine kinase S-type, mitochondrial (Ckmt2), found in Rattus norvegicus (Rat).